The following is a 331-amino-acid chain: Laforin (331 aa).

Positions 1-124 (MLFRFGVVVP…NNLVDGVYCL (124 aa)) constitute a CBM20 domain. Serine 25 carries the post-translational modification Phosphoserine; by AMPK. Substrate is bound by residues tryptophan 32, lysine 87, 103–107 (GPHHD), aspartate 197, aspartate 235, and arginine 241. In terms of domain architecture, Tyrosine-protein phosphatase spans 156 to 323 (HYSRILPNIW…QQDFFQKFGK (168 aa)). The active-site Phosphocysteine intermediate is the cysteine 266. The Glucan phosphatase signature motif CXAGXGR motif lies at 266–272 (CNAGVGR). Substrate-binding positions include 267–272 (NAGVGR) and tyrosine 304.

This sequence belongs to the protein-tyrosine phosphatase family. Homodimer. Interacts with itself. Interacts with PPP1R3B, PPP1R3C, PPP1R3D, HIRIP5, and EPM2AIP1. Binds glycogen and Lafora bodies. Interacts with NHLRC1/malin (via the NHL repeats). Forms a complex with NHLRC1/malin and HSP70. Interacts with PPP1R3D; in the presence of NHLC1/malin the interaction leads to ubiquitination and autophagic degradation of PPP1R3D. Interacts (via the phosphatase domain) with MAPT/Tau; the interaction dephosphorylates MAPT. Interacts with PRDM8. In terms of processing, polyubiquitinated by NHLRC1/malin. Post-translationally, phosphorylation on Ser-25 by AMPK affects the phosphatase activity of the enzyme and its ability to homodimerize and interact with NHLRC1, PPP1R3C or PRKAA2. Widely expressed.

The protein resides in the cytoplasm. It is found in the endoplasmic reticulum membrane. The protein localises to the cell membrane. It catalyses the reaction O-phospho-L-tyrosyl-[protein] + H2O = L-tyrosyl-[protein] + phosphate. The enzyme catalyses O-phospho-L-seryl-[protein] + H2O = L-seryl-[protein] + phosphate. It carries out the reaction O-phospho-L-threonyl-[protein] + H2O = L-threonyl-[protein] + phosphate. In terms of biological role, plays an important role in preventing glycogen hyperphosphorylation and the formation of insoluble aggregates, via its activity as glycogen phosphatase, and by promoting the ubiquitination of proteins involved in glycogen metabolism via its interaction with the E3 ubiquitin ligase NHLRC1/malin. Dephosphorylates phosphotyrosine and synthetic substrates, such as para-nitrophenylphosphate (pNPP), and has low activity with phosphoserine and phosphothreonine substrates (in vitro). Has also been shown to dephosphorylate MAPT. Shows strong phosphatase activity towards complex carbohydrates in vitro, avoiding glycogen hyperphosphorylation which is associated with reduced branching and formation of insoluble aggregates. Forms a complex with NHLRC1/malin and HSP70, which suppresses the cellular toxicity of misfolded proteins by promoting their degradation through the ubiquitin-proteasome system (UPS). Acts as a scaffold protein to facilitate PPP1R3C/PTG ubiquitination by NHLRC1/malin. Also promotes proteasome-independent protein degradation through the macroautophagy pathway. This chain is Laforin (Epm2a), found in Rattus norvegicus (Rat).